A 457-amino-acid chain; its full sequence is Flavin-containing monooxygenase FMO GS-OX2 (457 aa).

17-22 (GAGAAG) is an FAD binding site. Position 211–216 (211–216 (GNFASG)) interacts with NADP(+).

Belongs to the FMO family.

The catalysed reaction is a (Z)-omega-(methylsulfanyl)-N-sulfo-alkylhydroximate S-glucoside + NADPH + O2 + H(+) = a (Z)-omega-(methylsulfinyl)-alkyl-glucosinolate + NADP(+) + H2O. Functionally, catalyzes the conversion of methylthioalkyl glucosinolates of any chain length into methylsulfinylalkyl glucosinolates. The polypeptide is Flavin-containing monooxygenase FMO GS-OX2 (FMOGS-OX2) (Arabidopsis thaliana (Mouse-ear cress)).